The sequence spans 313 residues: Ribosomal protein L11 methyltransferase (313 aa).

S-adenosyl-L-methionine-binding residues include threonine 164, glycine 185, aspartate 207, and asparagine 249.

This sequence belongs to the methyltransferase superfamily. PrmA family.

Its subcellular location is the cytoplasm. It carries out the reaction L-lysyl-[protein] + 3 S-adenosyl-L-methionine = N(6),N(6),N(6)-trimethyl-L-lysyl-[protein] + 3 S-adenosyl-L-homocysteine + 3 H(+). Functionally, methylates ribosomal protein L11. This Clostridium perfringens (strain 13 / Type A) protein is Ribosomal protein L11 methyltransferase.